The sequence spans 162 residues: Eukaryotic translation initiation factor 5 (162 aa).

Residues 59–162 (PPNLNPAVQG…EKDRMDIFYE (104 aa)) are disordered. Positions 85 to 109 (GDTNGDTSQVDDQNESLEASVNENS) are enriched in polar residues. Basic and acidic residues predominate over residues 148–162 (DLEKREKDRMDIFYE).

It belongs to the eIF-2-beta/eIF-5 family.

In terms of biological role, catalyzes the hydrolysis of GTP bound to the 40S ribosomal initiation complex (40S.mRNA.Met-tRNA[F].eIF-2.GTP) with the subsequent joining of a 60S ribosomal subunit resulting in the release of eIF-2 and the guanine nucleotide. The subsequent joining of a 60S ribosomal subunit results in the formation of a functional 80S initiation complex (80S.mRNA.Met-tRNA[F]). This is Eukaryotic translation initiation factor 5 from Tribolium castaneum (Red flour beetle).